A 315-amino-acid polypeptide reads, in one-letter code: MSFSSKVKGEICRYVDMCKEDALAEISAIMKVSGTIAFSGSGLSFKMTTENPASARLIFTLLKEHFNIHSKLMVKKSNSLKKNNIYMVVISEDMGVRELLYETGILQDIDGIMNLNYRINKSMIETEENRRAYIRGAFIGGGSISNPERTYHLEFVTHSEEYAIDLKDIINTFGLNSKVIQRKSSHIIYIKEGEQIVDLLNIIGAHASLLELENIRIMKEMRNNVNRLVNCETANLSKTVNAAVRQVESIRLIQNKIGLQRLPQNLREVAELRLNYPDESLKELGQMLDPQVGKSGINHRLRKIEKIAEELRTGN.

Positions 280–313 form a DNA-binding region, H-T-H motif; that stretch reads SLKELGQMLDPQVGKSGINHRLRKIEKIAEELRT.

This sequence belongs to the WhiA family.

Its function is as follows. Involved in cell division and chromosome segregation. This is Probable cell division protein WhiA from Clostridium botulinum (strain Alaska E43 / Type E3).